A 131-amino-acid polypeptide reads, in one-letter code: Ribosome-binding factor A (131 aa).

The disordered stretch occupies residues 110–131 (QMNLGEDNEDNEDKENNDPGEE). The span at 115–131 (EDNEDNEDKENNDPGEE) shows a compositional bias: acidic residues.

It belongs to the RbfA family. Monomer. Binds 30S ribosomal subunits, but not 50S ribosomal subunits or 70S ribosomes.

It is found in the cytoplasm. Its function is as follows. One of several proteins that assist in the late maturation steps of the functional core of the 30S ribosomal subunit. Associates with free 30S ribosomal subunits (but not with 30S subunits that are part of 70S ribosomes or polysomes). Required for efficient processing of 16S rRNA. May interact with the 5'-terminal helix region of 16S rRNA. The chain is Ribosome-binding factor A from Natranaerobius thermophilus (strain ATCC BAA-1301 / DSM 18059 / JW/NM-WN-LF).